Here is a 1134-residue protein sequence, read N- to C-terminus: Nck-associated protein 1-like (1134 aa).

Residues 638 to 671 (KAKNKKSMKQRQAPRKGEPERDKPGAESHRKNRS) form a disordered region. Positions 639 to 651 (AKNKKSMKQRQAP) are enriched in basic residues. Positions 652 to 666 (RKGEPERDKPGAESH) are enriched in basic and acidic residues. A helical membrane pass occupies residues 999 to 1019 (LLLIFLAVSLPLLATDPSSFF).

In terms of assembly, in hematopoietic cells, component of the WAVE2 complex composed of ABI1, CYFIP1/SRA1, NCKAP1L/HEM1 and WASF2/WAVE2. Interacts with ARHGAP4, PIK3C3/VPS34 and PPP1R12A/MYPT1. Interacts with mammalian target of rapamycin complex 2 (mTORC2) components, including MTOR and RICTOR. As to expression, predominantly expressed in developing and mature hematopoietic cells. Also detected in urogenital tissues, including testis.

It localises to the membrane. It is found in the cytoplasm. Its function is as follows. Essential hematopoietic-specific regulator of the actin cytoskeleton. Controls lymphocyte development, activation, proliferation and homeostasis, erythrocyte membrane stability, as well as phagocytosis and migration by neutrophils and macrophages. Component of the WAVE2 complex which signals downstream of RAC to stimulate F-actin polymerization. Required for stabilization and/or translation of the WAVE2 complex proteins in hematopoietic cells. Within the WAVE2 complex, enables the cortical actin network to restrain excessive degranulation and granule release by T-cells. Required for efficient T-lymphocyte and neutrophil migration. Exhibits complex cycles of activation and inhibition to generate waves of propagating the assembly with actin. Also involved in mechanisms WAVE independent to regulate myosin and actin polymerization during neutrophil chemotaxis. In T-cells, required for proper mechanistic target of rapamycin complex 2 (mTORC2)-dependent AKT phosphorylation, cell proliferation and cytokine secretion, including that of IL2 and TNF. This Mus musculus (Mouse) protein is Nck-associated protein 1-like.